Here is a 64-residue protein sequence, read N- to C-terminus: Disintegrin VB7A (64 aa).

A Disintegrin domain is found at 1 to 64 (NSGNPCCDPV…SDCPRNPYKD (64 aa)). 4 disulfide bridges follow: C6–C29, C20–C26, C25–C50, and C38–C57. Positions 42–44 (RGD) match the Cell attachment site motif.

This sequence belongs to the disintegrin family. Dimeric disintegrin subfamily. In terms of assembly, heterodimer with VB7B; disulfide-linked. Expressed by the venom gland.

Its subcellular location is the secreted. In terms of biological role, poor inhibitor of platelet aggregation. The disintegrin inhibits the adhesion of cells expressing the RGD-dependent integrin alpha-5/beta-1 (ITGA5/ITGB1) to immobilized fibronectin. Inhibition on alpha-2b/beta-3 (ITGA2B/ITGB3) is low. The polypeptide is Disintegrin VB7A (Vipera berus berus (Common viper)).